An 88-amino-acid polypeptide reads, in one-letter code: DNA-directed RNA polymerase subunit omega (88 aa).

The protein belongs to the RNA polymerase subunit omega family. As to quaternary structure, the RNAP catalytic core consists of 2 alpha, 1 beta, 1 beta' and 1 omega subunit. When a sigma factor is associated with the core the holoenzyme is formed, which can initiate transcription.

The catalysed reaction is RNA(n) + a ribonucleoside 5'-triphosphate = RNA(n+1) + diphosphate. Functionally, promotes RNA polymerase assembly. Latches the N- and C-terminal regions of the beta' subunit thereby facilitating its interaction with the beta and alpha subunits. This is DNA-directed RNA polymerase subunit omega from Haemophilus influenzae (strain PittEE).